The sequence spans 251 residues: 4-hydroxy-tetrahydrodipicolinate reductase (251 aa).

NAD(+) contacts are provided by residues 8 to 13 (GAKGRM), 76 to 78 (GTT), and 106 to 109 (APNF). H136 serves as the catalytic Proton donor/acceptor. H137 contributes to the (S)-2,3,4,5-tetrahydrodipicolinate binding site. K140 functions as the Proton donor in the catalytic mechanism. A (S)-2,3,4,5-tetrahydrodipicolinate-binding site is contributed by 146–147 (GT).

This sequence belongs to the DapB family.

The protein resides in the cytoplasm. The enzyme catalyses (S)-2,3,4,5-tetrahydrodipicolinate + NAD(+) + H2O = (2S,4S)-4-hydroxy-2,3,4,5-tetrahydrodipicolinate + NADH + H(+). The catalysed reaction is (S)-2,3,4,5-tetrahydrodipicolinate + NADP(+) + H2O = (2S,4S)-4-hydroxy-2,3,4,5-tetrahydrodipicolinate + NADPH + H(+). The protein operates within amino-acid biosynthesis; L-lysine biosynthesis via DAP pathway; (S)-tetrahydrodipicolinate from L-aspartate: step 4/4. Catalyzes the conversion of 4-hydroxy-tetrahydrodipicolinate (HTPA) to tetrahydrodipicolinate. In Bifidobacterium longum (strain NCC 2705), this protein is 4-hydroxy-tetrahydrodipicolinate reductase.